Consider the following 510-residue polypeptide: MATGRGRILQQHWLGLQTLRGPSRGGGAARGRARAFGCRKGPGVKLSAGSAALRCHAGGGQHWESSFSCCSGFLDGMPSEILLKIFSYLDAVSLLCTGCVSRRFYHLANDNFIWIGIYSTAFSPARSNWKFNSVEKIAMSMSFLSVQDKEAGYWKKEYITKQIASVKAALADILKPVNPYTGLPVKTKEALRIFGLGWAIILKEKGGKEYIMEHVDLSINDTSVTVIWYGKKWPCLASLSTLDLCGMTPVFTDWYKTPTKHRLRWHSLIAKYNLSHLTISTMIGCDRLIRIFCLHPGLLVGVWKKEEELAFVMANLHFHHLVERSTLGSATIPYELPPHSPFLDDSPEYGLHGYQLHVDLHSGGVFYLCGTFRNLFTKRGNIENGHVKLIVIHLKNNREHLPLIGKVGLSWKTDIFDGCIKSCSMMDVTLLDEHGKPFWCFSSPVCLRSPATPSDSSSFLGQTYNVDYVDAEGRVHVELVWIRETEEYLIVNLVLYLSIAKINHWFGTEY.

The F-box domain maps to 77 to 117 (MPSEILLKIFSYLDAVSLLCTGCVSRRFYHLANDNFIWIGI).

Directly interacts with SKP1 and CUL1.

In terms of biological role, substrate-recognition component of the SCF (SKP1-CUL1-F-box protein)-type E3 ubiquitin ligase complex. The chain is F-box only protein 15 (FBXO15) from Homo sapiens (Human).